We begin with the raw amino-acid sequence, 398 residues long: Pentalenolactone synthase (398 aa).

Residue cysteine 347 participates in heme binding.

The protein belongs to the cytochrome P450 family. Heme is required as a cofactor.

It catalyses the reaction pentalenolactone F + 2 reduced [2Fe-2S]-[ferredoxin] + O2 + 2 H(+) = pentalenolactone + 2 oxidized [2Fe-2S]-[ferredoxin] + 2 H2O. The protein operates within antibiotic biosynthesis; pentalenolactone biosynthesis. In terms of biological role, catalyzes the final step in the biosynthesis of the sesquiterpenoid antibiotic pentalenolactone by mediating the oxidative rearrangement of pentalenolactone F to pentalenolactone. The chain is Pentalenolactone synthase (penM) from Streptomyces exfoliatus (Streptomyces hydrogenans).